The following is a 158-amino-acid chain: Cytochrome c-type biogenesis protein CcmE (158 aa).

Residues M1–A11 are compositionally biased toward polar residues. Residues M1–K20 form a disordered region. Residues M1–P23 are Cytoplasmic-facing. Residues L24 to N44 form a helical; Signal-anchor for type II membrane protein membrane-spanning segment. Residues L45–E158 are Extracellular-facing. Residues H137 and Y141 each coordinate heme.

This sequence belongs to the CcmE/CycJ family.

It is found in the cell membrane. In terms of biological role, heme chaperone required for the biogenesis of c-type cytochromes. Transiently binds heme delivered by CcmC and transfers the heme to apo-cytochromes in a process facilitated by CcmF and CcmH. This chain is Cytochrome c-type biogenesis protein CcmE, found in Deinococcus deserti (strain DSM 17065 / CIP 109153 / LMG 22923 / VCD115).